Consider the following 591-residue polypeptide: Myelin expression factor 2 (591 aa).

The segment at 1-92 (MADADKSEAA…GEKKGPNRNR (92 aa)) is disordered. Basic and acidic residues predominate over residues 22-36 (EPRRDTHPGEPEKPP). K44 participates in a covalent cross-link: Glycyl lysine isopeptide (Lys-Gly) (interchain with G-Cter in SUMO2). Composition is skewed to basic and acidic residues over residues 45–63 (MENDESVKEEKSDLKEKST) and 74–87 (YSKDKNSGTGEKKG). RRM domains lie at 91-169 (NRVF…EDPD) and 224-301 (STIF…MDDK). An omega-N-methylarginine mark is found at R397 and R417. At S422 the chain carries Phosphoserine. One can recognise an RRM 3 domain in the interval 514-590 (NQIFVRNLPF…REIDVRLDRN (77 aa)).

Monomer. Highly expressed in the brain.

It localises to the nucleus. Its function is as follows. Transcriptional repressor of the myelin basic protein gene (MBP). Binds to the proximal MB1 element 5'-TTGTCC-3' of the MBP promoter. Its binding to MB1 and function are inhibited by PURA. In Mus musculus (Mouse), this protein is Myelin expression factor 2 (Myef2).